A 217-amino-acid polypeptide reads, in one-letter code: Probable GTP-binding protein EngB (217 aa).

One can recognise an EngB-type G domain in the interval 24–207 (SQPEICFAGR…HALIESWLIP (184 aa)). Residues 32–39 (GRSNAGKS), 59–63 (GRTQH), 81–84 (DLPG), 148–151 (TKCD), and 185–188 (LFSA) each bind GTP. The Mg(2+) site is built by S39 and T61.

The protein belongs to the TRAFAC class TrmE-Era-EngA-EngB-Septin-like GTPase superfamily. EngB GTPase family. Requires Mg(2+) as cofactor.

Its function is as follows. Necessary for normal cell division and for the maintenance of normal septation. The chain is Probable GTP-binding protein EngB from Paraburkholderia xenovorans (strain LB400).